The chain runs to 198 residues: Recombination protein RecR (198 aa).

The segment at 57–72 (CSVCGRLTDDDPCSIC) adopts a C4-type zinc-finger fold. In terms of domain architecture, Toprim spans 80–175 (TTILVLEDSR…KVTRLARGLA (96 aa)).

Belongs to the RecR family.

May play a role in DNA repair. It seems to be involved in an RecBC-independent recombinational process of DNA repair. It may act with RecF and RecO. This chain is Recombination protein RecR, found in Streptococcus pneumoniae (strain Hungary19A-6).